Reading from the N-terminus, the 117-residue chain is UPF0342 protein lmo2223 (117 aa).

The protein belongs to the UPF0342 family.

In Listeria monocytogenes serovar 1/2a (strain ATCC BAA-679 / EGD-e), this protein is UPF0342 protein lmo2223.